Here is a 366-residue protein sequence, read N- to C-terminus: Protein disulfide isomerase-like 2-1 (366 aa).

The first 29 residues, Met-1–Ala-29, serve as a signal peptide directing secretion. Thioredoxin domains follow at residues Asp-30–Ala-138 and Thr-139–Gly-257. Residues Cys-59, Cys-62, Cys-178, and Cys-181 each act as nucleophile in the active site. 2 disulfides stabilise this stretch: Cys-59/Cys-62 and Cys-178/Cys-181.

Belongs to the protein disulfide isomerase family.

Its subcellular location is the secreted. It carries out the reaction Catalyzes the rearrangement of -S-S- bonds in proteins.. In terms of biological role, acts as a protein-folding catalyst that interacts with nascent polypeptides to catalyze the formation, isomerization, and reduction or oxidation of disulfide bonds. May play a role in storage protein biogenesis. The chain is Protein disulfide isomerase-like 2-1 (PDIL2-1) from Oryza sativa subsp. japonica (Rice).